Here is a 1818-residue protein sequence, read N- to C-terminus: Protein encore (1818 aa).

3 disordered regions span residues 47 to 68 (ANSS…GVSG), 123 to 282 (SAAG…NSSN), and 317 to 413 (AERH…GFIS). The segment covering 52 to 66 (VGSGSGPGPGSGAGV) has biased composition (gly residues). Polar residues predominate over residues 124-137 (AAGSSNLGRQNSFG). Over residues 141-152 (GNMKGKHLTRSH) the composition is skewed to basic residues. 4 stretches are compositionally biased toward low complexity: residues 156 to 179 (ESTS…QLQG), 186 to 199 (NNNN…AQSA), 217 to 233 (QQPQ…QQSV), and 266 to 282 (NSNG…NSSN). Residues Ser267 and Ser270 each carry the phosphoserine modification. A compositionally biased stretch (basic and acidic residues) spans 317–328 (AERHDRHERHEM). Ser336 is modified (phosphoserine). Residues 338-348 (NHDEEPYHYEP) show a composition bias toward basic and acidic residues. 2 stretches are compositionally biased toward low complexity: residues 372–381 (NLGGSSSGSI) and 391–410 (NCNN…NTSG). Residues 444 to 508 (RNILLKIEKD…QCVIVAVAKN (65 aa)) form the R3H domain. The region spanning 510-576 (RIPEIRFQSL…ARSRIFSRTG (67 aa)) is the SUZ domain. Phosphoserine is present on Ser535. Residues 557–568 (FEEREEDYDRAR) show a composition bias toward basic and acidic residues. Disordered regions lie at residues 557–806 (FEER…SYEQ), 885–916 (QEQE…SQTP), 936–959 (PYSQ…EEPK), 1176–1249 (GQAP…YNPS), 1332–1648 (AAAG…LVSH), and 1684–1709 (GAGA…RSHI). The span at 592–606 (YGGWEQQQQQQKQSQ) shows a compositional bias: low complexity. Residues 644 to 655 (NYGGPPSSGGPG) are compositionally biased toward gly residues. Positions 678-695 (QDSTGSTPWRLSPSSSGS) are enriched in polar residues. Over residues 713 to 771 (SGNQYQSQNQGNSSSGGYNNYRKSSPHQQQQSQQQQQSQQHHQQQLQQPQQLHQQSSQQ) the composition is skewed to low complexity. The segment covering 772–784 (YATTELSCSSTES) has biased composition (polar residues). Low complexity predominate over residues 893-904 (AGPSSSGSATSS). Low complexity predominate over residues 1176–1197 (GQAPMQQQAPHTGAGTTTGPPT). Polar residues predominate over residues 1220-1231 (SSNGSVVTSSAY). A compositionally biased stretch (low complexity) spans 1381-1392 (ASQSAPSTPAAP). Positions 1430–1443 (TPHYYQGQNSNEGY) are enriched in polar residues. The segment covering 1503–1521 (ASPSSVSLGGASSSGGANS) has biased composition (low complexity). 2 stretches are compositionally biased toward polar residues: residues 1554–1565 (AANSSPGVSSYE) and 1579–1596 (FRSQ…VSQR). The segment covering 1608–1633 (SHESSNNSPNSIVGSQSNSAANTPNA) has biased composition (low complexity). Gly residues predominate over residues 1684–1705 (GAGASGAAGSNGGHQPGGGGGA).

Interacts with hfp; however, given the nuclear localization of hfp, the relevance of such interaction is unclear. Interacts with CycE, Cul1, and the SCF-proteasome complex. Expressed in all germline cells of the germarium including the stem cells and dividing cystocytes.

It localises to the cytoplasm. In terms of biological role, required for the regulation of germline mitosis, karyosome formation, and establishment of dorsoventral (DS) polarity of the egg and embryo. Involved in proper grk mRNA localization and translation in the oocyte. May control germline mitosis by facilitating the cyclin E (CycE) proteolysis by the SCF-ubiquitin-proteasome complex. This is Protein encore (enc) from Drosophila melanogaster (Fruit fly).